The following is a 245-amino-acid chain: Complement C1q subcomponent subunit C (245 aa).

The N-terminal stretch at 1 to 28 (MVVGTSCQPQHGLYLLLLLLALPLRSQA) is a signal peptide. Positions 31–112 (GCYGIPGMPG…GPPGEPGEEG (82 aa)) constitute a Collagen-like domain. Residues Pro36, Pro39, Pro42, Pro45, and Pro63 each carry the 4-hydroxyproline modification. Positions 42-119 (PGTPGKDGHD…EEGRYKQKHQ (78 aa)) are disordered. At Lys75 the chain carries 5-hydroxylysine. Lys75 carries O-linked (Gal...) hydroxylysine glycosylation. 4-hydroxyproline is present on residues Pro81, Pro96, Pro99, and Pro105. Residues 98–107 (DPGPRGPPGE) are compositionally biased toward pro residues. In terms of domain architecture, C1q spans 115–245 (KQKHQSVFTV…VFSGFLLFPD (131 aa)). An intrachain disulfide couples Cys179 to Cys193.

Core component of the complement C1 complex, a calcium-dependent complex composed of 1 molecule of the C1Q subcomplex, 2 molecules of C1R and 2 molecules of C1S. The C1Q subcomplex is composed 18 subunits: 3 chains of C1QA, C1QB, and C1QC trimerize to form 6 collagen-like triple helices connected to six globular ligand-recognition modules (C1q domain). O-linked glycans consist of Glc-Gal disaccharides bound to the oxygen atom of post-translationally added hydroxyl groups.

The protein localises to the secreted. It localises to the cell surface. With respect to regulation, the C1Q subcomplex is inhibited by sulfated molecules, such as triterpenoid sulfates, heparan sulfate, or chondroitin sulfates. Functionally, core component of the complement C1 complex, a multiprotein complex that initiates the classical pathway of the complement system, a cascade of proteins that leads to phagocytosis and breakdown of pathogens and signaling that strengthens the adaptive immune system. The classical complement pathway is initiated by the C1Q subcomplex of the C1 complex, which specifically binds IgG or IgM immunoglobulins complexed with antigens, forming antigen-antibody complexes on the surface of pathogens: C1QA, together with C1QB and C1QC, specifically recognizes and binds the Fc regions of IgG or IgM via its C1q domain. Immunoglobulin-binding activates the proenzyme C1R, which cleaves C1S, initiating the proteolytic cascade of the complement system. The C1Q subcomplex is activated by a hexamer of IgG complexed with antigens, while it is activated by a pentameric IgM. The C1Q subcomplex also recognizes and binds phosphatidylserine exposed on the surface of cells undergoing programmed cell death, possibly promoting activation of the complement system. This is Complement C1q subcomponent subunit C from Rattus norvegicus (Rat).